Here is a 472-residue protein sequence, read N- to C-terminus: uncharacterized protein (472 aa).

Composition is skewed to low complexity over residues 1 to 21 (MAFS…SRPG) and 63 to 74 (ASSLPAPASSSP). The interval 1-74 (MAFSSSSLRR…SLPAPASSSP (74 aa)) is disordered.

This is an uncharacterized protein from Equus caballus (Horse).